The sequence spans 77 residues: EMBRYO SURROUNDING FACTOR 1-like protein 9 (77 aa).

A signal peptide spans Met-1 to Cys-22. Intrachain disulfides connect Cys-38-Cys-54, Cys-43-Cys-75, Cys-52-Cys-71, and Cys-55-Cys-64.

It belongs to the MEG family. In terms of tissue distribution, expressed in flowers.

The polypeptide is EMBRYO SURROUNDING FACTOR 1-like protein 9 (ESFL9) (Arabidopsis thaliana (Mouse-ear cress)).